We begin with the raw amino-acid sequence, 321 residues long: tRNA(Ile)-lysidine synthase (321 aa).

Residue 30 to 35 (SGGSDS) coordinates ATP.

It belongs to the tRNA(Ile)-lysidine synthase family.

The protein localises to the cytoplasm. The enzyme catalyses cytidine(34) in tRNA(Ile2) + L-lysine + ATP = lysidine(34) in tRNA(Ile2) + AMP + diphosphate + H(+). Ligates lysine onto the cytidine present at position 34 of the AUA codon-specific tRNA(Ile) that contains the anticodon CAU, in an ATP-dependent manner. Cytidine is converted to lysidine, thus changing the amino acid specificity of the tRNA from methionine to isoleucine. This is tRNA(Ile)-lysidine synthase from Chlamydia trachomatis serovar L2 (strain ATCC VR-902B / DSM 19102 / 434/Bu).